The following is a 359-amino-acid chain: MTRLTLALDVMGGDFGPSVTVPAALQALNSNSQLTLLLVGDPDTITPLLAKADFEQRSRLQIIPAQSVIASDARPSQAIRASRGSSMRVALELVKEGRAEACVSAGNTGALMGLAKLLLKPLEGIERPALMTVLPHQQKGKTVVLDLGANVDCDSTMLVQFAVMGSVMAEEVIGITNPRVALLNIGEEETKGLDSIRDASALLKTVPSINYIGYLEANELLTGKTDVLVCDGFTGNVTLKTMEGVVRMFLSLLKSQGESKKRSWWLLLLKRWLQKSLTRRFSHLNPDQYNGACLLGLRGTVIKSHGAANQRAFAVAIEQAVQAVQRQVPQRIAARLESVYPAGFELLEGGKNGHSRVHN.

This sequence belongs to the PlsX family. Homodimer. Probably interacts with PlsY.

It is found in the cytoplasm. It carries out the reaction a fatty acyl-[ACP] + phosphate = an acyl phosphate + holo-[ACP]. It participates in lipid metabolism; phospholipid metabolism. Catalyzes the reversible formation of acyl-phosphate (acyl-PO(4)) from acyl-[acyl-carrier-protein] (acyl-ACP). This enzyme utilizes acyl-ACP as fatty acyl donor, but not acyl-CoA. This is Phosphate acyltransferase from Citrobacter koseri (strain ATCC BAA-895 / CDC 4225-83 / SGSC4696).